A 280-amino-acid chain; its full sequence is uncharacterized protein (280 aa).

Transmembrane regions (helical) follow at residues 46–66 (LIFLLALPFLTLPFDSYFVCT), 81–101 (IACSYFVFPLISYQIWCFLIP), 114–134 (FFYLSGSCFFLFLFLTFSWVV), 137–157 (VWHFLYFVGATSTNSLMIKLQ), 170–190 (ILFISSVCSQVPVIVICLLEL), and 225–245 (IVACFLISLIIELAIFVALIV). Residues 258–280 (ESGSIEKKNKSSPPPRTWQSNYQ) form a disordered region.

The protein belongs to the TatC family.

It is found in the mitochondrion membrane. This is an uncharacterized protein from Arabidopsis thaliana (Mouse-ear cress).